The following is a 219-amino-acid chain: Redox-sensing transcriptional repressor Rex (219 aa).

The segment at residues 17-56 (RYLRYVEDLLNHDIMRISSSELSQRMGYTASQVRQDFNNF) is a DNA-binding region (H-T-H motif). NAD(+) is bound at residue 91-96 (GVGNLG).

The protein belongs to the transcriptional regulatory Rex family. Homodimer.

Its subcellular location is the cytoplasm. In terms of biological role, modulates transcription in response to changes in cellular NADH/NAD(+) redox state. The sequence is that of Redox-sensing transcriptional repressor Rex from Caldicellulosiruptor saccharolyticus (strain ATCC 43494 / DSM 8903 / Tp8T 6331).